The chain runs to 810 residues: LPS-assembly protein LptD (810 aa).

2 disordered regions span residues 1–26 (MTEQRRSPNKRANKPPALSGLSSRTG) and 54–79 (SAVPDIDQTESVVETAPEVPLAPPVS). Residues 1-49 (MTEQRRSPNKRANKPPALSGLSSRTGRLPASALRPLVLAMAGLSVGAHA) form the signal peptide.

Belongs to the LptD family. As to quaternary structure, component of the lipopolysaccharide transport and assembly complex. Interacts with LptE and LptA.

Its subcellular location is the cell outer membrane. Together with LptE, is involved in the assembly of lipopolysaccharide (LPS) at the surface of the outer membrane. The sequence is that of LPS-assembly protein LptD from Cupriavidus pinatubonensis (strain JMP 134 / LMG 1197) (Cupriavidus necator (strain JMP 134)).